A 418-amino-acid chain; its full sequence is Glutamyl-tRNA(Gln) amidotransferase subunit D (418 aa).

The 332-residue stretch at 74-405 folds into the Asparaginase/glutaminase domain; it reads KNISILSTGG…EEAKELMPKN (332 aa). Active-site residues include Thr-84, Thr-160, Asp-161, and Lys-237.

The protein belongs to the asparaginase 1 family. GatD subfamily. In terms of assembly, heterodimer of GatD and GatE.

The enzyme catalyses L-glutamyl-tRNA(Gln) + L-glutamine + ATP + H2O = L-glutaminyl-tRNA(Gln) + L-glutamate + ADP + phosphate + H(+). Its function is as follows. Allows the formation of correctly charged Gln-tRNA(Gln) through the transamidation of misacylated Glu-tRNA(Gln) in organisms which lack glutaminyl-tRNA synthetase. The reaction takes place in the presence of glutamine and ATP through an activated gamma-phospho-Glu-tRNA(Gln). The GatDE system is specific for glutamate and does not act on aspartate. This Methanococcus maripaludis (strain C6 / ATCC BAA-1332) protein is Glutamyl-tRNA(Gln) amidotransferase subunit D.